A 150-amino-acid polypeptide reads, in one-letter code: UPF0178 protein Ssed_1350 (150 aa).

The protein belongs to the UPF0178 family.

This Shewanella sediminis (strain HAW-EB3) protein is UPF0178 protein Ssed_1350.